The following is a 124-amino-acid chain: Ribonuclease pancreatic (124 aa).

Positions 7 and 10 each coordinate substrate. His-12 functions as the Proton acceptor in the catalytic mechanism. Cystine bridges form between Cys-26/Cys-84, Cys-40/Cys-95, Cys-58/Cys-110, and Cys-65/Cys-72. Asn-34 carries an N-linked (GlcNAc...) asparagine glycan. Residues 41 to 45 (KPVNT), Lys-66, and Arg-85 contribute to the substrate site. Catalysis depends on His-119, which acts as the Proton donor.

Belongs to the pancreatic ribonuclease family. Monomer. Interacts with and forms tight 1:1 complexes with RNH1. Dimerization of two such complexes may occur. Interaction with RNH1 inhibits this protein. In terms of tissue distribution, pancreas.

The protein localises to the secreted. It carries out the reaction an [RNA] containing cytidine + H2O = an [RNA]-3'-cytidine-3'-phosphate + a 5'-hydroxy-ribonucleotide-3'-[RNA].. The catalysed reaction is an [RNA] containing uridine + H2O = an [RNA]-3'-uridine-3'-phosphate + a 5'-hydroxy-ribonucleotide-3'-[RNA].. Its function is as follows. Endonuclease that catalyzes the cleavage of RNA on the 3' side of pyrimidine nucleotides. Acts on single-stranded and double-stranded RNA. The sequence is that of Ribonuclease pancreatic (RNASE1) from Eudorcas thomsonii (Thomson's gazelle).